The sequence spans 65 residues: Sodium channel neurotoxin MeuNaTxalpha-9 (65 aa).

The LCN-type CS-alpha/beta domain occupies 2–64; the sequence is RDGYIANDRN…VPIRIPGECR (63 aa). 4 disulfides stabilise this stretch: cysteine 12-cysteine 63, cysteine 16-cysteine 36, cysteine 22-cysteine 46, and cysteine 26-cysteine 48. An Arginine amide modification is found at arginine 64.

The protein belongs to the long (4 C-C) scorpion toxin superfamily. Sodium channel inhibitor family. Alpha subfamily. As to expression, expressed by the venom gland.

It is found in the secreted. Its function is as follows. Alpha toxins bind voltage-independently at site-3 of sodium channels (Nav) and inhibit the inactivation of the activated channels, thereby blocking neuronal transmission. This Mesobuthus eupeus (Lesser Asian scorpion) protein is Sodium channel neurotoxin MeuNaTxalpha-9.